Consider the following 267-residue polypeptide: Lyso-ornithine lipid O-acyltransferase (267 aa).

The chain crosses the membrane as a helical span at residues 7–27 (IFLVVAAMVALSLSLIPFQYL).

The protein belongs to the 1-acyl-sn-glycerol-3-phosphate acyltransferase family. OlsA subfamily.

The protein localises to the membrane. The catalysed reaction is a lyso-ornithine lipid + a fatty acyl-[ACP] = an N(2)-[(3R)-3-(acyloxy)acyl]-L-ornithine lipid + holo-[ACP]. The protein operates within lipid metabolism. Its function is as follows. Catalyzes the second step in the formation of ornithine lipids, which are phosphorus-free membrane lipids. Uses acyl-acyl carrier protein (acyl-AcpP) as an acyl donor and converts lyso-ornithine lipid (LOL) into ornithine lipid (OL). The protein is Lyso-ornithine lipid O-acyltransferase of Brucella abortus (strain 2308).